A 125-amino-acid polypeptide reads, in one-letter code: UPF0102 protein PSPA7_4996 (125 aa).

This sequence belongs to the UPF0102 family.

The chain is UPF0102 protein PSPA7_4996 from Pseudomonas paraeruginosa (strain DSM 24068 / PA7) (Pseudomonas aeruginosa (strain PA7)).